We begin with the raw amino-acid sequence, 453 residues long: BPI fold-containing family B member 6 (453 aa).

The N-terminal stretch at 1–18 (MLRILCLALCSLLTGTRA) is a signal peptide. N114 carries an N-linked (GlcNAc...) asparagine glycan. An intrachain disulfide couples C137 to C174. The N-linked (GlcNAc...) asparagine glycan is linked to N190.

The protein belongs to the BPI/LBP/Plunc superfamily. BPI/LBP family. Detected at very low levels in normal tonsils, and at higher levels in hypertrophic tonsils.

The protein localises to the secreted. The protein is BPI fold-containing family B member 6 (BPIFB6) of Homo sapiens (Human).